Here is a 53-residue protein sequence, read N- to C-terminus: Small ribosomal subunit protein uS14 (53 aa).

Zn(2+) contacts are provided by Cys17, Cys20, Cys36, and Cys39.

Belongs to the universal ribosomal protein uS14 family. Zinc-binding uS14 subfamily. As to quaternary structure, part of the 30S ribosomal subunit. Requires Zn(2+) as cofactor.

Functionally, binds 16S rRNA, required for the assembly of 30S particles. This chain is Small ribosomal subunit protein uS14, found in Methanococcus maripaludis (strain DSM 14266 / JCM 13030 / NBRC 101832 / S2 / LL).